Here is a 160-residue protein sequence, read N- to C-terminus: MITLYEAAIKTLITHRKQILKHPDSREILLALGLYWDKTHILLKCHECGKMSLTGKHSTKCININCLLILAIKKKNKRMVDTLIRMGADVTYIHLLKNKIKLSYNQLSMLKSNSQIALKELHAICYLLYGRLPKKIKQGMQLCKTMAGLCGELLCAFLAP.

The protein belongs to the asfivirus MGF 300 family.

Plays a role in virus cell tropism, and may be required for efficient virus replication in macrophages. This is Protein MGF 300-2R from Ornithodoros (relapsing fever ticks).